Consider the following 245-residue polypeptide: tRNA1(Val) (adenine(37)-N6)-methyltransferase (245 aa).

This sequence belongs to the methyltransferase superfamily. tRNA (adenine-N(6)-)-methyltransferase family.

It localises to the cytoplasm. It catalyses the reaction adenosine(37) in tRNA1(Val) + S-adenosyl-L-methionine = N(6)-methyladenosine(37) in tRNA1(Val) + S-adenosyl-L-homocysteine + H(+). Specifically methylates the adenine in position 37 of tRNA(1)(Val) (anticodon cmo5UAC). This Salmonella enteritidis PT4 (strain P125109) protein is tRNA1(Val) (adenine(37)-N6)-methyltransferase.